Consider the following 374-residue polypeptide: MAKRDYYEVLGVERGSSEADLKKAYRRLAMKHHPDRNPDSKESEEMFKEANEAYECLSDPNKRAAYDQYGHAGVDPSMGGGGAGFGGQNFSDIFGDVFSDFFGGGRGGQRGGAQRGSDLRYTLELNLEEAVRGTSVNIRVPTLVNCKPCDGSGAKKGSSPITCPTCGGIGQVRMQQGFFSVQQTCPRCHGQGKIISDPCDSCHGEGRVEEYKTLSVKVPAGVDTGDRIRLSGEGEAGTQGGPTGDLYVVINVREHSIFQRDGKHLFCEVPISFVDAALGGELEIPTLDGRVKLKIPEGTQTGKQFRIRGKGVAPVRGGGAGDLMCRVAVETPVNLGRRQRELLEEFRSSLEGDDSHSPKTTGFFDGVKRFFGDL.

One can recognise a J domain in the interval 5–70; the sequence is DYYEVLGVER…NKRAAYDQYG (66 aa). The CR-type zinc finger occupies 133 to 211; that stretch reads GTSVNIRVPT…CHGEGRVEEY (79 aa). Positions 146, 149, 163, 166, 185, 188, 199, and 202 each coordinate Zn(2+). 4 CXXCXGXG motif repeats span residues 146–153, 163–170, 185–192, and 199–206; these read CKPCDGSG, CPTCGGIG, CPRCHGQG, and CDSCHGEG.

It belongs to the DnaJ family. As to quaternary structure, homodimer. Requires Zn(2+) as cofactor.

It localises to the cytoplasm. In terms of biological role, participates actively in the response to hyperosmotic and heat shock by preventing the aggregation of stress-denatured proteins and by disaggregating proteins, also in an autonomous, DnaK-independent fashion. Unfolded proteins bind initially to DnaJ; upon interaction with the DnaJ-bound protein, DnaK hydrolyzes its bound ATP, resulting in the formation of a stable complex. GrpE releases ADP from DnaK; ATP binding to DnaK triggers the release of the substrate protein, thus completing the reaction cycle. Several rounds of ATP-dependent interactions between DnaJ, DnaK and GrpE are required for fully efficient folding. Also involved, together with DnaK and GrpE, in the DNA replication of plasmids through activation of initiation proteins. The polypeptide is Chaperone protein DnaJ (Pseudomonas fluorescens (strain SBW25)).